The sequence spans 195 residues: Glycerol-3-phosphate acyltransferase (195 aa).

5 helical membrane-spanning segments follow: residues 3-23, 51-71, 79-99, 111-131, and 153-173; these read EAAL…YFFT, GVAL…AWIG, LLVI…FLGF, IILF…LAIV, and LAMG…ALVV.

It belongs to the PlsY family. As to quaternary structure, probably interacts with PlsX.

Its subcellular location is the cell membrane. The catalysed reaction is an acyl phosphate + sn-glycerol 3-phosphate = a 1-acyl-sn-glycero-3-phosphate + phosphate. Its pathway is lipid metabolism; phospholipid metabolism. Its function is as follows. Catalyzes the transfer of an acyl group from acyl-phosphate (acyl-PO(4)) to glycerol-3-phosphate (G3P) to form lysophosphatidic acid (LPA). This enzyme utilizes acyl-phosphate as fatty acyl donor, but not acyl-CoA or acyl-ACP. This chain is Glycerol-3-phosphate acyltransferase, found in Syntrophomonas wolfei subsp. wolfei (strain DSM 2245B / Goettingen).